We begin with the raw amino-acid sequence, 538 residues long: Chaperonin GroEL 1 (538 aa).

Residues threonine 29–proline 32, aspartate 86–threonine 90, glycine 413, asparagine 478–alanine 480, and aspartate 494 contribute to the ATP site.

The protein belongs to the chaperonin (HSP60) family. In terms of assembly, forms a cylinder of 14 subunits composed of two heptameric rings stacked back-to-back. Interacts with the co-chaperonin GroES.

The protein localises to the cytoplasm. The catalysed reaction is ATP + H2O + a folded polypeptide = ADP + phosphate + an unfolded polypeptide.. Its function is as follows. Together with its co-chaperonin GroES, plays an essential role in assisting protein folding. The GroEL-GroES system forms a nano-cage that allows encapsulation of the non-native substrate proteins and provides a physical environment optimized to promote and accelerate protein folding. The sequence is that of Chaperonin GroEL 1 from Corynebacterium glutamicum (strain ATCC 13032 / DSM 20300 / JCM 1318 / BCRC 11384 / CCUG 27702 / LMG 3730 / NBRC 12168 / NCIMB 10025 / NRRL B-2784 / 534).